A 297-amino-acid polypeptide reads, in one-letter code: Ubiquinone biosynthesis protein COQ4, mitochondrial (297 aa).

The N-terminal 54 residues, 1–54 (MLSSARARLPISLCSFSLPFARLPNTLSRYQETWQRLPGRTHPTRSIRTTPAYE), are a transit peptide targeting the mitochondrion. Positions 178, 179, 182, and 194 each coordinate Zn(2+).

It belongs to the COQ4 family. In terms of assembly, component of a multi-subunit COQ enzyme complex, composed of at least COQ3, COQ4, COQ5, COQ6, COQ7 and COQ9. Zn(2+) serves as cofactor.

Its subcellular location is the mitochondrion inner membrane. The enzyme catalyses a 4-hydroxy-3-methoxy-5-(all-trans-polyprenyl)benzoate + H(+) = a 2-methoxy-6-(all-trans-polyprenyl)phenol + CO2. Its pathway is cofactor biosynthesis; ubiquinone biosynthesis. Its function is as follows. Lyase that catalyzes the C1-decarboxylation of 4-hydroxy-3-methoxy-5-(all-trans-polyprenyl)benzoic acid into 2-methoxy-6-(all-trans-polyprenyl)phenol during ubiquinone biosynthesis. This Laccaria bicolor (strain S238N-H82 / ATCC MYA-4686) (Bicoloured deceiver) protein is Ubiquinone biosynthesis protein COQ4, mitochondrial.